The primary structure comprises 580 residues: Alpha-glucosidase (580 aa).

A signal peptide spans 1–19 (MRPLGALSLFALLATTVSG). N-linked (GlcNAc...) asparagine glycans are attached at residues Asn-102 and Asn-127. The active-site Nucleophile is the Asp-224. The active-site Proton donor is Glu-290. Asn-501 is a glycosylation site (N-linked (GlcNAc...) asparagine). A helical membrane pass occupies residues 560-580 (AAAINLSIGLLLAIMARYIFV).

Belongs to the glycosyl hydrolase 13 family. In terms of assembly, (Microbial infection) Binds to L.sphaericus BinB subunit of the binary toxin BinAB. In 4th-instar larvae produced in the brush border membranes of the gastric caeca and the posterior stomach cells (at protein level).

The protein localises to the membrane. It carries out the reaction Hydrolysis of terminal, non-reducing (1-&gt;4)-linked alpha-D-glucose residues with release of alpha-D-glucose.. Its function is as follows. Probably an alpha-glucosidase, it has no alpha-amylase function. (Microbial infection) Serves as the larval receptor for Lysinibacillus sphaericus BinB toxin. The sequence is that of Alpha-glucosidase from Culex pipiens (House mosquito).